A 231-amino-acid chain; its full sequence is Lipoprotein-releasing system ATP-binding protein LolD (231 aa).

Residues leucine 6–leucine 231 form the ABC transporter domain. Glycine 42–serine 49 is an ATP binding site.

Belongs to the ABC transporter superfamily. Lipoprotein translocase (TC 3.A.1.125) family. As to quaternary structure, the complex is composed of two ATP-binding proteins (LolD) and two transmembrane proteins (LolC and LolE).

It localises to the cell inner membrane. Part of the ABC transporter complex LolCDE involved in the translocation of mature outer membrane-directed lipoproteins, from the inner membrane to the periplasmic chaperone, LolA. Responsible for the formation of the LolA-lipoprotein complex in an ATP-dependent manner. The chain is Lipoprotein-releasing system ATP-binding protein LolD from Hahella chejuensis (strain KCTC 2396).